The primary structure comprises 425 residues: Serine--tRNA ligase (425 aa).

Residue 231–233 coordinates L-serine; that stretch reads TAE. Residue 262–264 coordinates ATP; the sequence is RSE. Position 285 (glutamate 285) interacts with L-serine. An ATP-binding site is contributed by 349–352; sequence EISS. Serine 385 contacts L-serine.

It belongs to the class-II aminoacyl-tRNA synthetase family. Type-1 seryl-tRNA synthetase subfamily. In terms of assembly, homodimer. The tRNA molecule binds across the dimer.

It is found in the cytoplasm. It catalyses the reaction tRNA(Ser) + L-serine + ATP = L-seryl-tRNA(Ser) + AMP + diphosphate + H(+). The enzyme catalyses tRNA(Sec) + L-serine + ATP = L-seryl-tRNA(Sec) + AMP + diphosphate + H(+). It functions in the pathway aminoacyl-tRNA biosynthesis; selenocysteinyl-tRNA(Sec) biosynthesis; L-seryl-tRNA(Sec) from L-serine and tRNA(Sec): step 1/1. Functionally, catalyzes the attachment of serine to tRNA(Ser). Is also able to aminoacylate tRNA(Sec) with serine, to form the misacylated tRNA L-seryl-tRNA(Sec), which will be further converted into selenocysteinyl-tRNA(Sec). The sequence is that of Serine--tRNA ligase from Bartonella quintana (strain Toulouse) (Rochalimaea quintana).